The primary structure comprises 196 residues: V-type proton ATPase proteolipid subunit (196 aa).

Over 1–25 the chain is Lumenal; it reads MFQLLSFLLSGEATAVERIITDACP. The helical transmembrane segment at 26–46 threads the bilayer; it reads VYAPFFGAMGVTAALVFTVMG. Residues 47 to 72 lie on the Cytoplasmic side of the membrane; it reads AAYGTAKASVGISNMGVMKPDLVIKA. A helical transmembrane segment spans residues 73-93; that stretch reads FIPVIFAGVIAIYGLIICVIL. The Lumenal portion of the chain corresponds to 94-111; that stretch reads VGGIKPNANYTLMKSFTD. The helical transmembrane segment at 112 to 132 threads the bilayer; it reads LGAGLTVGLCGLAAGMAIGIV. At 133 to 150 the chain is on the cytoplasmic side; the sequence is GDSGVRAFGQQPKLYVIM. Residues 151 to 171 traverse the membrane as a helical segment; that stretch reads MLILIFSEALGLYGLIIGILL. Topologically, residues 172 to 196 are lumenal; the sequence is SSVSDTYCPGQALVPLNSGNVIGKN.

It belongs to the V-ATPase proteolipid subunit family. As to quaternary structure, V-ATPase is a heteromultimeric enzyme composed of a peripheral catalytic V1 complex (main components: subunits A, B, C, D, E, and F) attached to an integral membrane V0 proton pore complex (main component: the proteolipid protein; which is present as a hexamer that forms the proton-conducting pore).

It is found in the vacuole membrane. Its function is as follows. Proton-conducting pore forming subunit of the membrane integral V0 complex of vacuolar ATPase. V-ATPase is responsible for acidifying a variety of intracellular compartments in eukaryotic cells. The polypeptide is V-type proton ATPase proteolipid subunit (vatP) (Dictyostelium discoideum (Social amoeba)).